The sequence spans 84 residues: Putative defensin-like protein 101 (84 aa).

An N-terminal signal peptide occupies residues 1–27; the sequence is MDITKNIVTLLLVVLFPILFYYNNVLA. 4 cysteine pairs are disulfide-bonded: Cys39-Cys81, Cys43-Cys67, Cys52-Cys79, and Cys56-Cys80.

Belongs to the DEFL family.

The protein localises to the secreted. The polypeptide is Putative defensin-like protein 101 (Arabidopsis thaliana (Mouse-ear cress)).